Here is a 57-residue protein sequence, read N- to C-terminus: uncharacterized protein (57 aa).

Belongs to the ycf18/nblA family.

Its subcellular location is the plastid. It localises to the chloroplast. This is an uncharacterized protein from Aglaothamnion neglectum (Red alga).